The sequence spans 260 residues: Indole-3-glycerol phosphate synthase (260 aa).

This sequence belongs to the TrpC family.

The enzyme catalyses 1-(2-carboxyphenylamino)-1-deoxy-D-ribulose 5-phosphate + H(+) = (1S,2R)-1-C-(indol-3-yl)glycerol 3-phosphate + CO2 + H2O. It participates in amino-acid biosynthesis; L-tryptophan biosynthesis; L-tryptophan from chorismate: step 4/5. The polypeptide is Indole-3-glycerol phosphate synthase (Chloroherpeton thalassium (strain ATCC 35110 / GB-78)).